The sequence spans 862 residues: MQYVGRALGSVSKTWSSINPATLSGAIDVIVVEHPDGRLSCSPFHVRFGKFQILKPSQKKVQVFINEKLSNMPMKLSDSGEAYFVFEMGDQVTDVPDELLVSPVMSATSSPPQSPETSILEGGTEGEGEGENENKKKEKKVLEEPDFLDINDTGDSGSKNSETTGSLSPTESSTTTPPDSVEERKLVEQRTKNFQQKLNKKLTEIHIPSKLDNNGDLLLDTEGYKPNKNMMHDTDIQLKQLLKDEFGNDSDISSFIKEDKNGNIKIVNPYEHLTDLSPPGTPPTMATSGSVLGLDAMESGSTLNSLSSSPSGSDTEDETSFSKEQSSKSEKTSKKGTAGSGETEKRYIRTIRLTNDQLKCLNLTYGENDLKFSVDHGKAIVTSKLFVWRWDVPIVISDIDGTITKSDALGHVLAMIGKDWTHLGVAKLFSEISRNGYNILYLTARSAGQADSTRSYLRSIEQNGSKLPNGPVILSPDRTMAALRREVILKKPEVFKIACLNDIRSLYFEDSDNEVDTEEKSTPFFAGFGNRITDALSYRTVGIPSSRIFTINTEGEVHMELLELAGYRSSYIHINELVDHFFPPVSLDSVDLRTNTSMVPGSPPNRTLDNFDSEITSGRKTLFRGNQEEKFTDVNFWRDPLVDIDNLSDISNDDSDNIDEDTDVSQQSNISRNRANSVKTAKVTKAPQRNVSGSTNNNEVLAASSDVENASDLVSSHSSSGSTPNKSTMSKGDIGKQIYLELGSPLASPKLRYLDDMDDEDSNYNRTKSRRASSAAATSIDKEFKKLSVSKAGAPTRIVSKINVSNDVHSLGNSDTESRREQSVNETGRNQLPHNSMDDKDLDSRVSDEFDDDEFDEDEFED.

The interval 19 to 104 (NPATLSGAID…VPDELLVSPV (86 aa)) is N-LIP. Disordered regions lie at residues 104–183 (VMSA…SVEE) and 300–341 (GSTL…AGSG). The span at 105–117 (MSATSSPPQSPET) shows a compositional bias: polar residues. 2 positions are modified to phosphoserine: serine 110 and serine 114. A compositionally biased stretch (basic and acidic residues) spans 132–143 (NENKKKEKKVLE). Low complexity-rich tracts occupy residues 161–179 (SETT…TPPD) and 300–313 (GSTL…PSGS). Position 168 is a phosphoserine (serine 168). The DXDXT motif motif lies at 398–402 (DIDGT). Residue lysine 496 is modified to N6-acetyllysine. Serine 511 is modified (phosphoserine). Serine 602 is modified (phosphoserine; by CDC28). Residues 648–732 (SDISNDDSDN…TPNKSTMSKG (85 aa)) form a disordered region. Acidic residues predominate over residues 651-663 (SNDDSDNIDEDTD). Composition is skewed to polar residues over residues 664–679 (VSQQ…NSVK) and 687–699 (PQRN…NNNE). The segment covering 710 to 730 (ASDLVSSHSSSGSTPNKSTMS) has biased composition (low complexity). Threonine 723 bears the Phosphothreonine; by CDC28 mark. The residue at position 744 (serine 744) is a Phosphoserine; by CDC28. Phosphoserine is present on residues serine 748, serine 773, and serine 774. Positions 757-780 (MDDEDSNYNRTKSRRASSAAATSI) are disordered. Lysine 801 carries the post-translational modification N6-acetyllysine. A disordered region spans residues 807–862 (DVHSLGNSDTESRREQSVNETGRNQLPHNSMDDKDLDSRVSDEFDDDEFDEDEFED). Phosphoserine occurs at positions 810 and 814. Phosphothreonine is present on threonine 816. The span at 824 to 834 (VNETGRNQLPH) shows a compositional bias: polar residues. A compositionally biased stretch (basic and acidic residues) spans 836–848 (SMDDKDLDSRVSD). A phosphoserine mark is found at serine 844 and serine 847. A compositionally biased stretch (acidic residues) spans 849–862 (EFDDDEFDEDEFED).

It belongs to the lipin family. Mg(2+) serves as cofactor. Post-translationally, acetylation at Lys-496 and Lys-801 by ESA1 promotes synthesis of diacylglycerol. In terms of processing, phosphorylated by CDC28 at the onset of mitosis, and dephosphorylated by the NEM1-SPO7 complex. Phosphorylation regulates recruitment on promoters of lipid biosynthetic enzymes.

The protein localises to the cytoplasm. Its subcellular location is the nucleus membrane. It is found in the endoplasmic reticulum membrane. It catalyses the reaction a 1,2-diacyl-sn-glycero-3-phosphate + H2O = a 1,2-diacyl-sn-glycerol + phosphate. Phenylglyoxal and propranolol inhibit activity in dose-dependent manners with IC(50) values of 1.3 mM and 0.2 mM, respectively. Sertraline inhibits activity in a dose-dependent manner with an IC(50) value of 85 uM; the inhibitory effects of sertraline and propranolol are additive. Functionally, mg(2+)-dependent phosphatidate (PA) phosphatase which catalyzes the dephosphorylation of PA to yield diacylglycerol. Required for de novo lipid synthesis and formation of lipid droplets. Controls transcription of phospholipid biosynthetic genes and nuclear structure by regulating the amount of membrane present at the nuclear envelope. Involved in plasmid maintenance, in respiration and in cell proliferation. The sequence is that of Phosphatidic acid phosphohydrolase 1 (PAH1) from Saccharomyces cerevisiae (strain ATCC 204508 / S288c) (Baker's yeast).